The sequence spans 453 residues: Probable tRNA methyltransferase 9B (453 aa).

Ser-214 is subject to Phosphoserine.

The protein belongs to the methyltransferase superfamily.

May modify wobble uridines in specific arginine and glutamic acid tRNAs. Acts as a tumor suppressor by promoting the expression of LIN9. This chain is Probable tRNA methyltransferase 9B (TRMT9B), found in Bos taurus (Bovine).